The primary structure comprises 239 residues: uncharacterized protein (239 aa).

Residues 94–114 form a dksA C4-type; degenerate zinc finger; that stretch reads CEVSGKEIPFERLEALPTATT. Residues 133–158 are compositionally biased toward acidic residues; that stretch reads ETPFGQFEFDDDEEIRAPYDSEDSYQ. Residues 133-182 form a disordered region; that stretch reads ETPFGQFEFDDDEEIRAPYDSEDSYQDVEKYGNSQTPQDMENPPLSYDDM.

This is an uncharacterized protein from Bacillus subtilis (strain 168).